Here is a 225-residue protein sequence, read N- to C-terminus: UPF0700 transmembrane protein RA0705 (225 aa).

6 helical membrane-spanning segments follow: residues 17–37 (VGLALVAAISFLAGMTDAIGL), 66–86 (GLLLIGGLVSFVLGNAAGVMI), 95–115 (ALLFVSALLACAALQEGQPEL), 117–137 (FVSLIFAMGAVNASVEQIEGL), 168–188 (IIQIVPWLGMFAGAIMGAVLV), and 194–214 (LALWVPSLAALLLTAAAFQIP).

This sequence belongs to the UPF0700 family.

Its subcellular location is the cell membrane. This Rhizobium meliloti (strain 1021) (Ensifer meliloti) protein is UPF0700 transmembrane protein RA0705.